The primary structure comprises 103 residues: Serine protease inhibitor 4 (103 aa).

Cys56 and Cys73 are disulfide-bonded.

It belongs to the protease inhibitor I3 (leguminous Kunitz-type inhibitor) family.

The protein localises to the vacuole. In terms of biological role, inhibitor of serine protease. May protect the plant by inhibiting proteases of invading organisms. In Solanum tuberosum (Potato), this protein is Serine protease inhibitor 4.